The following is a 528-amino-acid chain: MSLIHLFLLLGLLSLEAAASFSPGSRSILRDIGSNVADQKDNAIELNATNFDSVFQDSPAKYAVLEFFAHWCPACRNYKPHYEKVARLFNGADAVYPGVVLMTRVDCAIKMNVKLCDKFSINHYPMLFWAPPKRFVGGSWGPKQEKNEISVVNEWRTADLLLNWINKQIGSSYGLDDQKLGNLLSNISDQEQISQAIFDIEEATEEAFDIILAHKAIKSSETSASFIRFLQLLVAHHPSRRCRTGSAEILVNFDDICPSGECSYDQESGAKDSLRNFHICGKDVPRGYYRFCRGSKNETRGFSCGLWVLMHSLSVRIEDGESQFAFTAICDFINNFFMCDDCRRHFHDMCLSVKTPFKKARDIALWLWSTHNKVNERLKKDEDSLGTGDPKFPKMIWPPKQLCPSCYLSSTEKNIDWDHDQVYKFLKKYYGQKLVSVYKKNGESVSKEEVIAAAEEMAVPTNALVVPVGAALAIALASCAFGALACYWRTQQKNRKYNYNPHYLKRYNSNYMVMNTFSNTESEREKER.

Residues 1 to 19 form the signal peptide; it reads MSLIHLFLLLGLLSLEAAA. The 136-residue stretch at 35 to 170 folds into the Thioredoxin domain; sequence NVADQKDNAI…LLNWINKQIG (136 aa). Asn47 carries an N-linked (GlcNAc...) asparagine glycan. Active-site nucleophile residues include Cys72 and Cys75. An intrachain disulfide couples Cys72 to Cys75. Asn186 and Asn297 each carry an N-linked (GlcNAc...) asparagine glycan. Cys292 and Cys304 are joined by a disulfide. The ERV/ALR sulfhydryl oxidase domain maps to 295-397; it reads SKNETRGFSC…GDPKFPKMIW (103 aa). FAD-binding positions include Arg300, Trp307, His311, Asp341, His345, 368–375, Lys394, and Trp397; that span reads WSTHNKVN. Cys339 and Cys342 are disulfide-bonded. An intrachain disulfide couples Cys403 to Cys406.

The cofactor is FAD. As to expression, highly expressed in roots.

The protein localises to the secreted. The protein resides in the cell wall. The catalysed reaction is 2 R'C(R)SH + O2 = R'C(R)S-S(R)CR' + H2O2. In terms of biological role, sulfhydryl oxidase involved in the regulation of cation homeostasis. Positively regulates shoot accumulation of K(+) and inhibits accumulation of toxic cations. Acts at the level of root K(+) efflux systems involved in xylem loading (root symplast-xylem interface). The chain is Sulfhydryl oxidase 1 (QSOX1) from Arabidopsis thaliana (Mouse-ear cress).